The sequence spans 251 residues: uncharacterized protein (251 aa).

This is an uncharacterized protein from Mycoplasma genitalium (strain ATCC 33530 / DSM 19775 / NCTC 10195 / G37) (Mycoplasmoides genitalium).